Here is a 642-residue protein sequence, read N- to C-terminus: uncharacterized protein (642 aa).

Topologically, residues 1 to 15 (MVHITLGQAIWVSVK) are cytoplasmic. A helical membrane pass occupies residues 16-36 (PIIKIYLIIGVGFLMAKMGIL). Residues 37 to 42 (TVEATR) are Extracellular-facing. Residues 43–63 (IISDIVLTVLLPSLSFNKIVA) form a helical membrane-spanning segment. Residues 64–73 (NIEDKDIKSV) lie on the Cytoplasmic side of the membrane. A helical membrane pass occupies residues 74–94 (GIICLSALLIFGSGFFFAYVV). The Extracellular segment spans residues 95–104 (RLFLPVPKQW). The helical transmembrane segment at 105–125 (YGGILAGGMFPNISDLPIAYL) threads the bilayer. Residues 126-142 (QSMDQGLVFSEEEGNKG) are Cytoplasmic-facing. The helical transmembrane segment at 143 to 163 (VANVIIFLTMFLICIFNLGGF) threads the bilayer. Over 164–460 (RLIESDFEYN…FLKNCLRPCS (297 aa)) the chain is Extracellular. 2 disordered regions span residues 183 to 206 (ETTKTQPAVSANTTNTDTSERFFS) and 227 to 324 (GTKG…SQPR). Polar residues-rich tracts occupy residues 240-260 (RRSTNSIAPLSLPDTSSNSKI) and 272-312 (IACT…SSID). A helical membrane pass occupies residues 461–481 (MAVIIALTVAFIPWVKALFVT). The Cytoplasmic segment spans residues 482–499 (TANTPHISQAPDNAPPLS). Residues 500–520 (FFMDFTGYVGAACVPFGLILL) form a helical membrane-spanning segment. The Extracellular segment spans residues 521-538 (GATLGRLKIGNLYPGFWK). The chain crosses the membrane as a helical span at residues 539–559 (AAVTLVILRQCVMPIFGVLWC). The Cytoplasmic portion of the chain corresponds to 560–574 (DRLVKAGWVNWQDDR). Residues 575–595 (MLLFVIAISWNLPTMTTLIYF) form a helical membrane-spanning segment. Residues 596 to 614 (TASFTPPETTAPIQMECVS) lie on the Extracellular side of the membrane. A helical membrane pass occupies residues 615-635 (FFLMLQYPLMVVSLPFLVSYF). The Cytoplasmic portion of the chain corresponds to 636–642 (LKVQMNL).

The protein belongs to the auxin efflux carrier (TC 2.A.69) family.

It is found in the membrane. This is an uncharacterized protein from Saccharomyces cerevisiae (strain ATCC 204508 / S288c) (Baker's yeast).